Here is a 333-residue protein sequence, read N- to C-terminus: Holliday junction branch migration complex subunit RuvB (333 aa).

The tract at residues 1–181 (MNDILNKEPM…FGISSHMEYY (181 aa)) is large ATPase domain (RuvB-L). Residues leucine 20, arginine 21, glycine 62, lysine 65, threonine 66, threonine 67, 128-130 (EDF), arginine 171, tyrosine 181, and arginine 218 each bind ATP. Threonine 66 serves as a coordination point for Mg(2+). Positions 182 to 252 (QERDLEEIVK…ITDKALTILD (71 aa)) are small ATPAse domain (RuvB-S). The interval 255–333 (AAGLDYIDQK…HLGYVYNEEE (79 aa)) is head domain (RuvB-H). 3 residues coordinate DNA: arginine 291, arginine 310, and arginine 315.

The protein belongs to the RuvB family. In terms of assembly, homohexamer. Forms an RuvA(8)-RuvB(12)-Holliday junction (HJ) complex. HJ DNA is sandwiched between 2 RuvA tetramers; dsDNA enters through RuvA and exits via RuvB. An RuvB hexamer assembles on each DNA strand where it exits the tetramer. Each RuvB hexamer is contacted by two RuvA subunits (via domain III) on 2 adjacent RuvB subunits; this complex drives branch migration. In the full resolvosome a probable DNA-RuvA(4)-RuvB(12)-RuvC(2) complex forms which resolves the HJ.

It is found in the cytoplasm. It catalyses the reaction ATP + H2O = ADP + phosphate + H(+). Functionally, the RuvA-RuvB-RuvC complex processes Holliday junction (HJ) DNA during genetic recombination and DNA repair, while the RuvA-RuvB complex plays an important role in the rescue of blocked DNA replication forks via replication fork reversal (RFR). RuvA specifically binds to HJ cruciform DNA, conferring on it an open structure. The RuvB hexamer acts as an ATP-dependent pump, pulling dsDNA into and through the RuvAB complex. RuvB forms 2 homohexamers on either side of HJ DNA bound by 1 or 2 RuvA tetramers; 4 subunits per hexamer contact DNA at a time. Coordinated motions by a converter formed by DNA-disengaged RuvB subunits stimulates ATP hydrolysis and nucleotide exchange. Immobilization of the converter enables RuvB to convert the ATP-contained energy into a lever motion, pulling 2 nucleotides of DNA out of the RuvA tetramer per ATP hydrolyzed, thus driving DNA branch migration. The RuvB motors rotate together with the DNA substrate, which together with the progressing nucleotide cycle form the mechanistic basis for DNA recombination by continuous HJ branch migration. Branch migration allows RuvC to scan DNA until it finds its consensus sequence, where it cleaves and resolves cruciform DNA. This is Holliday junction branch migration complex subunit RuvB from Lactococcus lactis subsp. cremoris (strain SK11).